The following is a 137-amino-acid chain: SMR2 protein (137 aa).

Residues 1–18 (MLVVLLTAALLALSSAQN) form the signal peptide. The tract at residues 14–113 (SSAQNTDEEV…LHHRENLRPQ (100 aa)) is disordered. A compositionally biased stretch (low complexity) spans 75-85 (QQQQPLPVENQ). The span at 99 to 110 (PPPETLHHRENL) shows a compositional bias: basic and acidic residues.

It localises to the secreted. In terms of biological role, unknown, male-specific function. The chain is SMR2 protein (Smr2) from Rattus norvegicus (Rat).